The chain runs to 300 residues: Probable alpha-L-glutamate ligase (300 aa).

In terms of domain architecture, ATP-grasp spans 104-287; sequence LQLLARQGID…IASRMIAWIE (184 aa). Residues lysine 141, 178–179, aspartate 187, and 211–213 contribute to the ATP site; these read EY and RSN. Aspartate 248, glutamate 260, and asparagine 262 together coordinate Mg(2+). 3 residues coordinate Mn(2+): aspartate 248, glutamate 260, and asparagine 262.

It belongs to the RimK family. Mg(2+) is required as a cofactor. Requires Mn(2+) as cofactor.

This Klebsiella pneumoniae (strain 342) protein is Probable alpha-L-glutamate ligase.